The sequence spans 375 residues: Probable pectin lyase D (375 aa).

A signal peptide spans Met-1–Gly-19. Disulfide bonds link Cys-82-Cys-101 and Cys-91-Cys-225. Asn-128 carries N-linked (GlcNAc...) asparagine glycosylation. Arg-255 is a catalytic residue. Cys-321 and Cys-329 form a disulfide bridge.

It belongs to the polysaccharide lyase 1 family.

The protein localises to the secreted. It catalyses the reaction Eliminative cleavage of (1-&gt;4)-alpha-D-galacturonan methyl ester to give oligosaccharides with 4-deoxy-6-O-methyl-alpha-D-galact-4-enuronosyl groups at their non-reducing ends.. Its function is as follows. Pectinolytic enzymes consist of four classes of enzymes: pectin lyase, polygalacturonase, pectin methylesterase and rhamnogalacturonase. Among pectinolytic enzymes, pectin lyase is the most important in depolymerization of pectin, since it cleaves internal glycosidic bonds of highly methylated pectins. This Aspergillus flavus (strain ATCC 200026 / FGSC A1120 / IAM 13836 / NRRL 3357 / JCM 12722 / SRRC 167) protein is Probable pectin lyase D (pelD).